A 400-amino-acid chain; its full sequence is Elongation factor Tu (400 aa).

Residues 10-210 (KPHCNVGTIG…VDTYIPIPPR (201 aa)) enclose the tr-type G domain. A G1 region spans residues 19 to 26 (GHVDHGKT). 19 to 26 (GHVDHGKT) is a binding site for GTP. T26 is a binding site for Mg(2+). The segment at 60 to 64 (GLTIA) is G2. The G3 stretch occupies residues 81 to 84 (DCPG). GTP contacts are provided by residues 81 to 85 (DCPGH) and 136 to 139 (NKCD). Positions 136-139 (NKCD) are G4. The tract at residues 174-176 (SAI) is G5.

Belongs to the TRAFAC class translation factor GTPase superfamily. Classic translation factor GTPase family. EF-Tu/EF-1A subfamily. In terms of assembly, monomer.

The protein resides in the cytoplasm. The enzyme catalyses GTP + H2O = GDP + phosphate + H(+). Functionally, GTP hydrolase that promotes the GTP-dependent binding of aminoacyl-tRNA to the A-site of ribosomes during protein biosynthesis. The chain is Elongation factor Tu from Dehalococcoides mccartyi (strain CBDB1).